The primary structure comprises 468 residues: 5-carboxymethyl-2-hydroxymuconate semialdehyde dehydrogenase (468 aa).

The active site involves Glu-244. The active-site Nucleophile is Cys-278.

The protein belongs to the aldehyde dehydrogenase family. Homodimer.

The catalysed reaction is 2-hydroxy-5-carboxymethylmuconate semialdehyde + NAD(+) + H2O = (2E,4Z)-5-hydroxypenta-2,4-diene-1,2,5-tricarboxylate + NADH + 2 H(+). It functions in the pathway aromatic compound metabolism; 4-hydroxyphenylacetate degradation; pyruvate and succinate semialdehyde from 4-hydroxyphenylacetate: step 3/7. Functionally, catalyzes the conversion of 5-carboxymethyl-2-hydroxy-muconic semialdehyde (CHMS) into 5-carboxymethyl-2-hydroxy-muconic acid (CHM or (2E,4Z)-5-hydroxypenta-2,4-diene-1,2,5-tricarboxylate). Is involved in a meta-cleavage pathway for the catabolism of 4-hydroxyphenylacetate (4-HPA) via homoprotocatechuate (HPC or 3,4-dihydroxyphenylacetate). In Escherichia coli, this protein is 5-carboxymethyl-2-hydroxymuconate semialdehyde dehydrogenase.